A 387-amino-acid polypeptide reads, in one-letter code: Penicillopepsin-1 (387 aa).

A signal peptide spans 1-19 (MVNSKTVVSALALSALAAA). The propeptide at 20–66 (APAPSSTTSFSINQVAVKKPAIHPAVKYAKALAKYHAEIPSNVASAA) is activation peptide. The 300-residue stretch at 85 to 384 (YVTPITAGSS…DGDNLQLGFA (300 aa)) folds into the Peptidase A1 domain. Catalysis depends on residues Asp-101 and Asp-279. N-linked (GlcNAc...) asparagine glycosylation occurs at Asn-304. Cys-315 and Cys-347 are joined by a disulfide.

Belongs to the peptidase A1 family. As to quaternary structure, monomer.

The protein localises to the secreted. It catalyses the reaction Hydrolysis of proteins with broad specificity similar to that of pepsin A, preferring hydrophobic residues at P1 and P1', but also cleaving 20-Gly-|-Glu-21 in the B chain of insulin. Clots milk, and activates trypsinogen.. Its function is as follows. Secreted aspartic endopeptidase that allows assimilation of proteinaceous substrates. The scissile peptide bond is attacked by a nucleophilic water molecule activated by two aspartic residues in the active site. Shows a broad primary substrate specificity. Favors hydrophobic residues at the P1 and P1' positions, but can also activate trypsinogen and hydrolyze the B chain of insulin between positions 'Gly-20' and 'Glu-21'. The sequence is that of Penicillopepsin-1 (pepA) from Talaromyces stipitatus (strain ATCC 10500 / CBS 375.48 / QM 6759 / NRRL 1006) (Penicillium stipitatum).